A 95-amino-acid chain; its full sequence is UPF0473 protein CD630_12860 (95 aa).

This sequence belongs to the UPF0473 family.

The polypeptide is UPF0473 protein CD630_12860 (Clostridioides difficile (strain 630) (Peptoclostridium difficile)).